We begin with the raw amino-acid sequence, 344 residues long: tRNA N6-adenosine threonylcarbamoyltransferase (344 aa).

Positions 111 and 115 each coordinate Fe cation. Residues 134–138 (LVSGG), aspartate 167, glycine 180, and asparagine 273 contribute to the substrate site. Residue aspartate 301 coordinates Fe cation.

The protein belongs to the KAE1 / TsaD family. Fe(2+) serves as cofactor.

Its subcellular location is the cytoplasm. It catalyses the reaction L-threonylcarbamoyladenylate + adenosine(37) in tRNA = N(6)-L-threonylcarbamoyladenosine(37) in tRNA + AMP + H(+). Its function is as follows. Required for the formation of a threonylcarbamoyl group on adenosine at position 37 (t(6)A37) in tRNAs that read codons beginning with adenine. Is involved in the transfer of the threonylcarbamoyl moiety of threonylcarbamoyl-AMP (TC-AMP) to the N6 group of A37, together with TsaE and TsaB. TsaD likely plays a direct catalytic role in this reaction. This Cupriavidus taiwanensis (strain DSM 17343 / BCRC 17206 / CCUG 44338 / CIP 107171 / LMG 19424 / R1) (Ralstonia taiwanensis (strain LMG 19424)) protein is tRNA N6-adenosine threonylcarbamoyltransferase.